The following is a 735-amino-acid chain: Protein PAT1 homolog 2 (735 aa).

Disordered stretches follow at residues 39–93 and 336–366; these read TFGL…REVK and QLHPQHRRILSQRQRPQSSSRKQWESRPDPY. Basic and acidic residues-rich tracts occupy residues 49–59 and 67–93; these read EPTKQEEDHKK and PKIEEPEKPQPIKETKKPEKSPLREVK. Low complexity predominate over residues 346–356; sequence SQRQRPQSSSR.

It belongs to the PAT1 family. As to quaternary structure, interacts with ribonucleoprotein complex components. Interacts with cpeb.

The protein localises to the cytoplasm. The protein resides in the nucleus. In terms of biological role, RNA-binding protein that acts as a translational repressor. This is Protein PAT1 homolog 2 (patl2) from Xenopus tropicalis (Western clawed frog).